The sequence spans 358 residues: Trans-anol O-methyltransferase 1 (358 aa).

G201, D224, D244, M245, and R259 together coordinate S-adenosyl-L-methionine. H262 (proton acceptor) is an active-site residue.

The protein belongs to the class I-like SAM-binding methyltransferase superfamily. Cation-independent O-methyltransferase family. COMT subfamily. In terms of tissue distribution, highly expressed in developing fruits. Expressed at low levels in roots, young leaves, buds and flowers.

The catalysed reaction is (E)-anol + S-adenosyl-L-methionine = (E)-anethole + S-adenosyl-L-homocysteine + H(+). It carries out the reaction (E)-isoeugenol + S-adenosyl-L-methionine = (E)-isomethyleugenol + S-adenosyl-L-homocysteine + H(+). The protein operates within aromatic compound metabolism; phenylpropanoid biosynthesis. Inhibited by zinc and copper. Functionally, phenylpropene O-methyltransferase that catalyzes the conversion of trans-anol to trans-anethole and isoeugenol to isomethyleugenol. Phenylpropenes are the primary constituents of various essential plant oils. They are produced as antimicrobial and antianimal compounds, or as floral attractants of pollinators. In Pimpinella anisum (Anise), this protein is Trans-anol O-methyltransferase 1 (AIMT1).